We begin with the raw amino-acid sequence, 938 residues long: Phosphoenolpyruvate carboxylase (938 aa).

Residues histidine 151 and lysine 591 contribute to the active site.

The protein belongs to the PEPCase type 1 family. Mg(2+) is required as a cofactor.

It catalyses the reaction oxaloacetate + phosphate = phosphoenolpyruvate + hydrogencarbonate. Its function is as follows. Forms oxaloacetate, a four-carbon dicarboxylic acid source for the tricarboxylic acid cycle. This Roseiflexus castenholzii (strain DSM 13941 / HLO8) protein is Phosphoenolpyruvate carboxylase.